Reading from the N-terminus, the 309-residue chain is Taste receptor type 2 member 114 (309 aa).

Residues 1–7 (MLSTMEG) lie on the Extracellular side of the membrane. A helical transmembrane segment spans residues 8 to 28 (VLLSVSTSEAVLGIVGNTFIA). Over 29–43 (LVNCMDYNRNKKLSN) the chain is Cytoplasmic. A helical transmembrane segment spans residues 44–64 (IGFILTGLAISRICLVLILIT). Over 65 to 87 (EAYIKIFYPQLLSPVNIIELISY) the chain is Extracellular. The helical transmembrane segment at 88-108 (LWIIICQLNVWFATSLSIFYF) threads the bilayer. The Cytoplasmic portion of the chain corresponds to 109–127 (LKIANFSHYIFVWLKRRID). The chain crosses the membrane as a helical span at residues 128–148 (LVFFFLIGCLLISWLFSFPVV). Over 149-182 (AKMVKDNKMLYINTSWQIHMKKSELIINYVFTNG) the chain is Extracellular. N-linked (GlcNAc...) asparagine glycosylation occurs at Asn-161. The chain crosses the membrane as a helical span at residues 183 to 203 (GVFLFFMIMLIVCFLLIISLW). Topologically, residues 204-233 (RHRRQMESNKLGFRDLNTEVHVRTIKVLLS) are cytoplasmic. Residues 234–254 (FIILFILHFMGITINVICLLI) traverse the membrane as a helical segment. Residues 255–259 (PESNL) lie on the Extracellular side of the membrane. A helical membrane pass occupies residues 260–280 (LFMFGLTTAFIYPGCHSLILI). Topologically, residues 281–309 (LANSRLKQCSVMILQLLKCCENGKELRDT) are cytoplasmic.

The protein belongs to the G-protein coupled receptor T2R family.

It is found in the membrane. Its function is as follows. Putative taste receptor which may play a role in the perception of bitterness. This is Taste receptor type 2 member 114 from Mus musculus (Mouse).